We begin with the raw amino-acid sequence, 128 residues long: Ribosome-binding factor A (128 aa).

This sequence belongs to the RbfA family. As to quaternary structure, monomer. Binds 30S ribosomal subunits, but not 50S ribosomal subunits or 70S ribosomes.

The protein resides in the cytoplasm. Functionally, one of several proteins that assist in the late maturation steps of the functional core of the 30S ribosomal subunit. Associates with free 30S ribosomal subunits (but not with 30S subunits that are part of 70S ribosomes or polysomes). Required for efficient processing of 16S rRNA. May interact with the 5'-terminal helix region of 16S rRNA. This Idiomarina loihiensis (strain ATCC BAA-735 / DSM 15497 / L2-TR) protein is Ribosome-binding factor A.